We begin with the raw amino-acid sequence, 282 residues long: Type 1 encapsulin shell protein (282 aa).

This sequence belongs to the encapsulin family. Family 1 subfamily. Initially thought to form a 180 subunit shell. Forms hollow shells composed of 240 subunits, making a shell about 42-43 nm in diameter. The monomer is capable of assuming 4 different conformations which allows packaging into the icosahedron. The shell has 12 pentameric and 30 hexameric capsomers which form the vertices and faces of the icosahedral nanocompartment.

Its subcellular location is the encapsulin nanocompartment. In terms of biological role, shell component of a type 1 encapsulin nanocompartment. Assembles into proteinaceous icosahedral shells 42-43 nm in diameter with an iron- and phosphorus-rich core (1Fe:1.1P) which can store over 23,000-35,000 iron atoms (with a calculated maximum of 83,000 Fe). There are 2 types of negatively charged open pores in the cryo-electron structure; a 3-fold pore where 3 hexamers meet with a minimal size of 7.2 Angstroms and a 5-fold pore where pentamers meet with a minimal size of 2.3 Angstroms. The 2-fold pore seen in other encapsulin nanocompartments is closed. Empty compartments can be generated in E.coli. Both types of pore have extra density in their centers in the structure. 2 different cargo proteins have been identified (IMEF and Fer); when both are expressed in E.coli with the shell protein only IMEF is detected within the nanocompartment. E.coli expressing all 3 genes stores the largest amount of iron and is protected from Fe/H2O2-induced oxidative stress. Part of the iron-mineralizing encapsulin-associated Firmicute (IMEF) system. This Bacillus thermotolerans (Quasibacillus thermotolerans) protein is Type 1 encapsulin shell protein.